Here is a 146-residue protein sequence, read N- to C-terminus: Aminoglycoside N(6')-acetyltransferase type 1 (146 aa).

The N-acetyltransferase domain occupies 1–146 (MIVICDHDNL…RVVFYRKTLG (146 aa)). Residues Trp21, Tyr66, Glu79, and Asp115 each coordinate substrate. An acetyl-CoA-binding site is contributed by Asn120. Residue Glu136 coordinates substrate.

As to quaternary structure, homodimer.

The catalysed reaction is kanamycin B + acetyl-CoA = N(6')-acetylkanamycin B + CoA + H(+). Functionally, catalyzes the transfer of an acetyl group from acetyl-CoA to the 6'-amino group of aminoglycoside molecules conferring resistance to antibiotics containing the purpurosamine ring including amikacin, tobramycin, netilmicin, isepamicin and sisomicin. The polypeptide is Aminoglycoside N(6')-acetyltransferase type 1 (Serratia marcescens).